The chain runs to 603 residues: UvrABC system protein C (603 aa).

Residues 15–92 (DQPGCYLMKD…IKKHDPRFNI (78 aa)) form the GIY-YIG domain. The region spanning 197-232 (KTVKNDLMKKMQEAAENMEFEKAGEFRDQINAIETT) is the UVR domain.

This sequence belongs to the UvrC family. In terms of assembly, interacts with UvrB in an incision complex.

It localises to the cytoplasm. In terms of biological role, the UvrABC repair system catalyzes the recognition and processing of DNA lesions. UvrC both incises the 5' and 3' sides of the lesion. The N-terminal half is responsible for the 3' incision and the C-terminal half is responsible for the 5' incision. The polypeptide is UvrABC system protein C (Listeria monocytogenes serovar 1/2a (strain ATCC BAA-679 / EGD-e)).